Here is a 380-residue protein sequence, read N- to C-terminus: Histidinol-phosphate aminotransferase 1 (380 aa).

The residue at position 235 (Lys-235) is an N6-(pyridoxal phosphate)lysine.

Belongs to the class-II pyridoxal-phosphate-dependent aminotransferase family. Histidinol-phosphate aminotransferase subfamily. In terms of assembly, homodimer. Pyridoxal 5'-phosphate serves as cofactor.

The catalysed reaction is L-histidinol phosphate + 2-oxoglutarate = 3-(imidazol-4-yl)-2-oxopropyl phosphate + L-glutamate. The protein operates within amino-acid biosynthesis; L-histidine biosynthesis; L-histidine from 5-phospho-alpha-D-ribose 1-diphosphate: step 7/9. The sequence is that of Histidinol-phosphate aminotransferase 1 from Psychrobacter arcticus (strain DSM 17307 / VKM B-2377 / 273-4).